A 526-amino-acid chain; its full sequence is Beta,beta-carotene 15,15'-dioxygenase (526 aa).

H172, H236, H307, and H512 together coordinate Fe cation.

It belongs to the carotenoid oxygenase family. It depends on Fe(2+) as a cofactor.

It is found in the cytoplasm. Its subcellular location is the cytosol. The catalysed reaction is all-trans-beta-carotene + O2 = 2 all-trans-retinal. Its pathway is cofactor metabolism; retinol metabolism. Its function is as follows. Symmetrically cleaves beta-carotene into two molecules of retinal using a dioxygenase mechanism. The polypeptide is Beta,beta-carotene 15,15'-dioxygenase (Gallus gallus (Chicken)).